The primary structure comprises 217 residues: Pre-mRNA-splicing factor sap62 (217 aa).

A Matrin-type zinc finger spans residues 54–84; sequence FECRLCLTTHANENSYLTHTQGKKHQTNLAR.

This sequence belongs to the SF3A2 family. As to quaternary structure, belongs to the 40S cdc5-associated complex (or cwf complex), a spliceosome sub-complex reminiscent of a late-stage spliceosome composed of the U2, U5 and U6 snRNAs and at least brr2, cdc5, cwf2/prp3, cwf3/syf1, cwf4/syf3, cwf5/ecm2, spp42/cwf6, cwf7/spf27, cwf8, cwf9, cwf10, cwf11, cwf12, prp45/cwf13, cwf14, cwf15, cwf16, cwf17, cwf18, cwf19, cwf20, cwf21, cwf22, cwf23, cwf24, cwf25, cwf26, cyp7/cwf27, cwf28, cwf29/ist3, lea1, msl1, prp5/cwf1, prp10, prp12/sap130, prp17, prp22, sap61, sap62, sap114, sap145, slu7, smb1, smd1, smd3, smf1, smg1 and syf2.

Its subcellular location is the nucleus. The protein resides in the cytoplasm. Functionally, involved in mRNA splicing where it associates with cdc5 and the other cwf proteins as part of the spliceosome. The sequence is that of Pre-mRNA-splicing factor sap62 (sap62) from Schizosaccharomyces pombe (strain 972 / ATCC 24843) (Fission yeast).